The chain runs to 41 residues: Photosystem I reaction center subunit IX (41 aa).

The chain crosses the membrane as a helical span at residues Tyr-7–Ile-27.

Belongs to the PsaJ family.

It localises to the plastid. The protein localises to the chloroplast thylakoid membrane. In terms of biological role, may help in the organization of the PsaE and PsaF subunits. The sequence is that of Photosystem I reaction center subunit IX from Chara vulgaris (Common stonewort).